Reading from the N-terminus, the 62-residue chain is Large ribosomal subunit protein bL33 (62 aa).

This sequence belongs to the bacterial ribosomal protein bL33 family.

The sequence is that of Large ribosomal subunit protein bL33 from Azobacteroides pseudotrichonymphae genomovar. CFP2.